The sequence spans 128 residues: Probable 4-amino-4-deoxy-L-arabinose-phosphoundecaprenol flippase subunit ArnF (128 aa).

At 1 to 10 the chain is on the cytoplasmic side; it reads MKGYLWGGAS. A helical membrane pass occupies residues 11–31; sequence VVLVTVAQLVLKWGMMNIPLL. Residues 32-47 are Periplasmic-facing; it reads SLADINVQFLTMYFVQ. Residues 48–68 form a helical membrane-spanning segment; that stretch reads LASVMCGLMGYALSMLCWFFA. Residues 69–77 lie on the Cytoplasmic side of the membrane; sequence LRYLPLNRA. The helical transmembrane segment at 78 to 98 threads the bilayer; it reads YPLLSLSYALVYLGAVLLPWF. Over 99–101 the chain is Periplasmic; that stretch reads NEP. A helical membrane pass occupies residues 102–122; that stretch reads ATLLKTLGAGFILLGIWLINI. The Cytoplasmic portion of the chain corresponds to 123 to 128; it reads KPIKAS.

Belongs to the ArnF family. Heterodimer of ArnE and ArnF.

It is found in the cell inner membrane. Its pathway is bacterial outer membrane biogenesis; lipopolysaccharide biosynthesis. Functionally, translocates 4-amino-4-deoxy-L-arabinose-phosphoundecaprenol (alpha-L-Ara4N-phosphoundecaprenol) from the cytoplasmic to the periplasmic side of the inner membrane. This Yersinia pseudotuberculosis serotype O:1b (strain IP 31758) protein is Probable 4-amino-4-deoxy-L-arabinose-phosphoundecaprenol flippase subunit ArnF.